Reading from the N-terminus, the 281-residue chain is MNDTQNPLHGAEASPLGKPVAYRDTYAPELLFPIARQLKRDEIGVRADALPFCGEDLWNAYELSWLNPRGKPVVALAEFRVPADTPRLVESKSLKLYLNSFNQSRFDDAAAVRMAIARDLSAAAGGAVGVAVWPLGGQAERRFAAPEGVCIDDLDVAIDTYQPDPTLLSAGDEVVSETLYSHLLKTNCLVTGQPDWGMVAVRYTGPRIDRAGLLRYIVSFREHNEFHEQCVERVFCDITARCRPQRLAVWARYTRRGGLDINPFRASDRDQRADEAMEIRQ.

89 to 91 provides a ligand contact to substrate; the sequence is VES. Position 91 to 92 (91 to 92) interacts with NADPH; it reads SK. Cys188 functions as the Thioimide intermediate in the catalytic mechanism. Residue Asp195 is the Proton donor of the active site. 227-228 is a substrate binding site; that stretch reads HE. NADPH is bound at residue 256 to 257; the sequence is RG.

Belongs to the GTP cyclohydrolase I family. QueF type 2 subfamily. In terms of assembly, homodimer.

The protein localises to the cytoplasm. The enzyme catalyses 7-aminomethyl-7-carbaguanine + 2 NADP(+) = 7-cyano-7-deazaguanine + 2 NADPH + 3 H(+). Its pathway is tRNA modification; tRNA-queuosine biosynthesis. Functionally, catalyzes the NADPH-dependent reduction of 7-cyano-7-deazaguanine (preQ0) to 7-aminomethyl-7-deazaguanine (preQ1). The protein is NADPH-dependent 7-cyano-7-deazaguanine reductase of Azoarcus sp. (strain BH72).